Here is a 167-residue protein sequence, read N- to C-terminus: Schlafen-like protein (167 aa).

It belongs to the Schlafen family. Subgroup poxviridae B3 subfamily.

This Bos taurus (Bovine) protein is Schlafen-like protein.